The sequence spans 257 residues: Adenosylcobinamide-GDP ribazoletransferase (257 aa).

A run of 7 helical transmembrane segments spans residues 30–50, 52–72, 109–129, 132–152, 175–195, 198–218, and 237–257; these read IVYF…IGWI, MLLF…VLIT, SLLA…DIIS, SLWV…LLTY, LITA…FIFL, NIVL…IILF, and GIEL…FMFF.

This sequence belongs to the CobS family. Mg(2+) is required as a cofactor.

It localises to the cell membrane. It carries out the reaction alpha-ribazole + adenosylcob(III)inamide-GDP = adenosylcob(III)alamin + GMP + H(+). It catalyses the reaction alpha-ribazole 5'-phosphate + adenosylcob(III)inamide-GDP = adenosylcob(III)alamin 5'-phosphate + GMP + H(+). It participates in cofactor biosynthesis; adenosylcobalamin biosynthesis; adenosylcobalamin from cob(II)yrinate a,c-diamide: step 7/7. Joins adenosylcobinamide-GDP and alpha-ribazole to generate adenosylcobalamin (Ado-cobalamin). Also synthesizes adenosylcobalamin 5'-phosphate from adenosylcobinamide-GDP and alpha-ribazole 5'-phosphate. The protein is Adenosylcobinamide-GDP ribazoletransferase of Clostridioides difficile (strain 630) (Peptoclostridium difficile).